The sequence spans 510 residues: Maturase K (510 aa).

The protein belongs to the intron maturase 2 family. MatK subfamily.

The protein localises to the plastid. Functionally, usually encoded in the trnK tRNA gene intron. Probably assists in splicing its own and other chloroplast group II introns. This is Maturase K from Aneura mirabilis (Parasitic liverwort).